Consider the following 123-residue polypeptide: Small ribosomal subunit protein uS12 (123 aa).

Residues 1–22 (MATINQLVRQPRKRSVEKSDVP) form a disordered region. Position 89 is a 3-methylthioaspartic acid (D89). Residues 100 to 123 (GSLDTSGVKGRNQGRSKYGTKRPK) form a disordered region. The span at 111 to 123 (NQGRSKYGTKRPK) shows a compositional bias: basic residues.

This sequence belongs to the universal ribosomal protein uS12 family. Part of the 30S ribosomal subunit. Contacts proteins S8 and S17. May interact with IF1 in the 30S initiation complex.

Functionally, with S4 and S5 plays an important role in translational accuracy. Its function is as follows. Interacts with and stabilizes bases of the 16S rRNA that are involved in tRNA selection in the A site and with the mRNA backbone. Located at the interface of the 30S and 50S subunits, it traverses the body of the 30S subunit contacting proteins on the other side and probably holding the rRNA structure together. The combined cluster of proteins S8, S12 and S17 appears to hold together the shoulder and platform of the 30S subunit. In Pseudomonas putida (strain GB-1), this protein is Small ribosomal subunit protein uS12.